Reading from the N-terminus, the 217-residue chain is Guanylate kinase (217 aa).

Over residues methionine 1–serine 10 the composition is skewed to low complexity. The tract at residues methionine 1–glycine 30 is disordered. The Guanylate kinase-like domain occupies glycine 30–tyrosine 208. Glycine 37–glycine 44 serves as a coordination point for ATP.

It belongs to the guanylate kinase family.

Its subcellular location is the cytoplasm. The catalysed reaction is GMP + ATP = GDP + ADP. It carries out the reaction dZMP + ATP = dZDP + ADP. It participates in purine metabolism. In terms of biological role, essential for recycling GMP and indirectly, cGMP. (Microbial infection) Catalyzes the phosphorylation of dZMP to dZDP, when the bacterium is infected by a phage that produces the substrate for the synthesis of dZTP (2- amino-2'-deoxyadenosine 5'-triphosphate), which is then used by the phage as a DNA polymerase substrate. In Synechococcus sp. (strain JA-3-3Ab) (Cyanobacteria bacterium Yellowstone A-Prime), this protein is Guanylate kinase.